Here is a 359-residue protein sequence, read N- to C-terminus: Aminomethyltransferase (359 aa).

It belongs to the GcvT family. In terms of assembly, the glycine cleavage system is composed of four proteins: P, T, L and H.

The enzyme catalyses N(6)-[(R)-S(8)-aminomethyldihydrolipoyl]-L-lysyl-[protein] + (6S)-5,6,7,8-tetrahydrofolate = N(6)-[(R)-dihydrolipoyl]-L-lysyl-[protein] + (6R)-5,10-methylene-5,6,7,8-tetrahydrofolate + NH4(+). Functionally, the glycine cleavage system catalyzes the degradation of glycine. The sequence is that of Aminomethyltransferase from Synechococcus sp. (strain RCC307).